We begin with the raw amino-acid sequence, 200 residues long: Holliday junction branch migration complex subunit RuvA (200 aa).

The tract at residues 1–63 (MYAYVKGKLT…EDAQLLYGFS (63 aa)) is domain I. The tract at residues 64-142 (SEEEKDMFLS…ITEEDSDSLL (79 aa)) is domain II. Positions 143–149 (QVDATST) are flexible linker. The domain III stretch occupies residues 150–200 (VQDQFVQEAMLALEALGYSKRELAKVEKTLNKNKYDSVDEAVKAGLQLVVS).

It belongs to the RuvA family. In terms of assembly, homotetramer. Forms an RuvA(8)-RuvB(12)-Holliday junction (HJ) complex. HJ DNA is sandwiched between 2 RuvA tetramers; dsDNA enters through RuvA and exits via RuvB. An RuvB hexamer assembles on each DNA strand where it exits the tetramer. Each RuvB hexamer is contacted by two RuvA subunits (via domain III) on 2 adjacent RuvB subunits; this complex drives branch migration. In the full resolvosome a probable DNA-RuvA(4)-RuvB(12)-RuvC(2) complex forms which resolves the HJ.

It localises to the cytoplasm. Its function is as follows. The RuvA-RuvB-RuvC complex processes Holliday junction (HJ) DNA during genetic recombination and DNA repair, while the RuvA-RuvB complex plays an important role in the rescue of blocked DNA replication forks via replication fork reversal (RFR). RuvA specifically binds to HJ cruciform DNA, conferring on it an open structure. The RuvB hexamer acts as an ATP-dependent pump, pulling dsDNA into and through the RuvAB complex. HJ branch migration allows RuvC to scan DNA until it finds its consensus sequence, where it cleaves and resolves the cruciform DNA. In Staphylococcus aureus (strain Mu3 / ATCC 700698), this protein is Holliday junction branch migration complex subunit RuvA.